We begin with the raw amino-acid sequence, 106 residues long: Toxin-like structure LSTX-D8 (106 aa).

The N-terminal stretch at 1-20 is a signal peptide; it reads MTKVLVVVALLVTLISYSSS. The propeptide occupies 21-41; it reads EGIDDLEADELLSLMANEQTR. Cystine bridges form between cysteine 45–cysteine 60, cysteine 52–cysteine 69, cysteine 59–cysteine 85, and cysteine 71–cysteine 83.

It belongs to the neurotoxin 19 (CSTX) family. 02 (D7) subfamily. In terms of tissue distribution, expressed by the venom gland.

Its subcellular location is the secreted. This Lycosa singoriensis (Wolf spider) protein is Toxin-like structure LSTX-D8.